The chain runs to 568 residues: Urease subunit alpha (568 aa).

The Urease domain occupies 130–568 (GGIDTHIHFI…LPMAQRYFLF (439 aa)). Positions 135, 137, and 218 each coordinate Ni(2+). N6-carboxylysine is present on lysine 218. Histidine 220 is a substrate binding site. Histidine 247 and histidine 273 together coordinate Ni(2+). The active-site Proton donor is histidine 321. Aspartate 361 lines the Ni(2+) pocket.

The protein belongs to the metallo-dependent hydrolases superfamily. Urease alpha subunit family. As to quaternary structure, heterotrimer of UreA (gamma), UreB (beta) and UreC (alpha) subunits. Three heterotrimers associate to form the active enzyme. Requires Ni cation as cofactor. Post-translationally, carboxylation allows a single lysine to coordinate two nickel ions.

It is found in the cytoplasm. It catalyses the reaction urea + 2 H2O + H(+) = hydrogencarbonate + 2 NH4(+). Its pathway is nitrogen metabolism; urea degradation; CO(2) and NH(3) from urea (urease route): step 1/1. In Burkholderia orbicola (strain MC0-3), this protein is Urease subunit alpha.